A 205-amino-acid chain; its full sequence is Ephrin-A1 (205 aa).

The signal sequence occupies residues 1-17 (MEFLWAPLLGLCCSLAA). Residues 18-151 (ADRHIVFWNS…KLKVTVNGKI (134 aa)) form the Ephrin RBD domain. Asparagine 26 is a glycosylation site (N-linked (GlcNAc...) asparagine). Intrachain disulfides connect cysteine 51–cysteine 92 and cysteine 80–cysteine 140. Residue serine 182 is the site of GPI-anchor amidated serine attachment. Positions 183–205 (AAPRLFPLVWAVLLLPLLLLQTQ) are cleaved as a propeptide — removed in mature form.

Belongs to the ephrin family. In terms of assembly, monomer. Homodimer. Forms heterodimers with EPHA2. Binds to the receptor tyrosine kinases EPHA2, EPHA3, EPHA4, EPHA5, EPHA6 and EPHA7. Also binds with low affinity to EPHA1. Undergoes proteolysis by a metalloprotease to give rise to a soluble monomeric form. Post-translationally, N-Glycosylation is required for binding to EPHA2 receptor and inducing its internalization.

It localises to the cell membrane. It is found in the secreted. Cell surface GPI-bound ligand for Eph receptors, a family of receptor tyrosine kinases which are crucial for migration, repulsion and adhesion during neuronal, vascular and epithelial development. Binds promiscuously Eph receptors residing on adjacent cells, leading to contact-dependent bidirectional signaling into neighboring cells. Plays an important role in angiogenesis and tumor neovascularization. The recruitment of VAV2, VAV3 and PI3-kinase p85 subunit by phosphorylated EPHA2 is critical for EFNA1-induced RAC1 GTPase activation and vascular endothelial cell migration and assembly. Exerts anti-oncogenic effects in tumor cells through activation and down-regulation of EPHA2. Activates EPHA2 by inducing tyrosine phosphorylation which leads to its internalization and degradation. Acts as a negative regulator in the tumorigenesis of gliomas by down-regulating EPHA2 and FAK. Can evoke collapse of embryonic neuronal growth cone and regulates dendritic spine morphogenesis. This chain is Ephrin-A1 (Efna1), found in Rattus norvegicus (Rat).